The chain runs to 250 residues: Glutamate racemase (250 aa).

Substrate contacts are provided by residues 7–8 (DS) and 39–40 (YG). Cys70 serves as the catalytic Proton donor/acceptor. 71–72 (NT) contributes to the substrate binding site. The active-site Proton donor/acceptor is Cys180. 181-182 (TH) is a binding site for substrate.

The protein belongs to the aspartate/glutamate racemases family.

The catalysed reaction is L-glutamate = D-glutamate. The protein operates within cell wall biogenesis; peptidoglycan biosynthesis. In terms of biological role, provides the (R)-glutamate required for cell wall biosynthesis. The polypeptide is Glutamate racemase (Campylobacter jejuni subsp. jejuni serotype O:2 (strain ATCC 700819 / NCTC 11168)).